The primary structure comprises 548 residues: Folylpolyglutamate synthase (548 aa).

Gly130–Ser133 is an ATP binding site. Mg(2+) contacts are provided by Ser157, Glu234, and His262. 2 residues coordinate ATP: Arg382 and Asp396.

The protein belongs to the folylpolyglutamate synthase family. It depends on a monovalent cation as a cofactor.

The protein resides in the mitochondrion inner membrane. Its subcellular location is the mitochondrion matrix. It is found in the cytoplasm. It carries out the reaction (6S)-5,6,7,8-tetrahydrofolyl-(gamma-L-Glu)(n) + L-glutamate + ATP = (6S)-5,6,7,8-tetrahydrofolyl-(gamma-L-Glu)(n+1) + ADP + phosphate + H(+). The protein operates within cofactor biosynthesis; tetrahydrofolylpolyglutamate biosynthesis. Its function is as follows. Catalyzes conversion of folates to polyglutamate derivatives allowing concentration of folate compounds in the cell and the intracellular retention of these cofactors, which are important substrates for most of the folate-dependent enzymes that are involved in one-carbon transfer reactions involved in purine, pyrimidine and amino acid synthesis. Required for methionine synthesis and maintenance of intact mitochondrial DNA. Involved in telomere maintenance. The protein is Folylpolyglutamate synthase of Saccharomyces cerevisiae (strain FostersB) (Baker's yeast).